A 199-amino-acid polypeptide reads, in one-letter code: Probable thymidylate kinase (199 aa).

ATP is bound at residue 7 to 14 (GLDGSGKT).

This sequence belongs to the thymidylate kinase family.

It carries out the reaction dTMP + ATP = dTDP + ADP. This chain is Probable thymidylate kinase, found in Halobacterium salinarum (strain ATCC 29341 / DSM 671 / R1).